Reading from the N-terminus, the 148-residue chain is SsrA-binding protein (148 aa).

The disordered stretch occupies residues 129–148; the sequence is ETEKDRDWQREKARLMREKA.

Belongs to the SmpB family.

The protein resides in the cytoplasm. Required for rescue of stalled ribosomes mediated by trans-translation. Binds to transfer-messenger RNA (tmRNA), required for stable association of tmRNA with ribosomes. tmRNA and SmpB together mimic tRNA shape, replacing the anticodon stem-loop with SmpB. tmRNA is encoded by the ssrA gene; the 2 termini fold to resemble tRNA(Ala) and it encodes a 'tag peptide', a short internal open reading frame. During trans-translation Ala-aminoacylated tmRNA acts like a tRNA, entering the A-site of stalled ribosomes, displacing the stalled mRNA. The ribosome then switches to translate the ORF on the tmRNA; the nascent peptide is terminated with the 'tag peptide' encoded by the tmRNA and targeted for degradation. The ribosome is freed to recommence translation, which seems to be the essential function of trans-translation. This Ralstonia nicotianae (strain ATCC BAA-1114 / GMI1000) (Ralstonia solanacearum) protein is SsrA-binding protein.